Consider the following 372-residue polypeptide: G patch domain and ankyrin repeat-containing protein 1 (372 aa).

Residues 74-110 (DSSSSKPQRAEPMRERKKKRRRVTREPAAAGVPRQGR) are disordered. 2 ANK repeats span residues 124-155 (LAAQ…ARDA) and 156-186 (FWWT…WVGV). Disordered stretches follow at residues 211–233 (RESH…SSQF) and 251–271 (AHLL…GVPT). Residues 220-233 (PENQNRSTPSSSQF) show a composition bias toward polar residues. Positions 271-317 (TSSPGFRLLLRGGWEPGMGLGPRGEGRANPIPTILKRDQEGLGYRSP) constitute a G-patch domain. Residue Lys306 forms a Glycyl lysine isopeptide (Lys-Gly) (interchain with G-Cter in SUMO2) linkage. 2 stretches are compositionally biased toward basic and acidic residues: residues 330-340 (TRAVSGRERVP) and 348-357 (RENRRQEEKG). The interval 330 to 357 (TRAVSGRERVPRVATLSQRENRRQEEKG) is disordered.

The chain is G patch domain and ankyrin repeat-containing protein 1 (Gpank1) from Mus musculus (Mouse).